Here is a 376-residue protein sequence, read N- to C-terminus: Nucleoside diphosphate kinase homolog 7 (376 aa).

One can recognise a DM10 domain in the interval 3-91; sequence HSERFVFIAE…YTARQLGSRK (89 aa).

It belongs to the NDK family. Component of sperm flagellar doublet microtubules. Component of the gamma-tubulin ring complex. In terms of processing, undergoes autophosphorylation. In terms of tissue distribution, expressed in airway epithelial cells.

It is found in the cytoplasm. Its subcellular location is the cytoskeleton. It localises to the microtubule organizing center. The protein localises to the centrosome. The protein resides in the nucleus. It is found in the spindle. Its subcellular location is the cilium axoneme. It localises to the flagellum axoneme. The protein localises to the cell projection. The protein resides in the cilium. Functionally, possesses an intrinsic kinase activity. Displays 3'-5' exonuclease activity with a preference for single-stranded DNA. Does not seem to have nucleoside diphosphate kinase activity. Functional component of the gamma-tubulin ring complex, implicated in the regulation of the microtubule-nucleating activity of the gamma-tubulin ring complex in centrosomes, in a kinase activity-dependent manner. Part of the dynein-decorated doublet microtubules (DMTs) in cilia axoneme, which is required for motile cilia beating. This Homo sapiens (Human) protein is Nucleoside diphosphate kinase homolog 7.